The primary structure comprises 599 residues: Fumarate reductase flavoprotein subunit (599 aa).

Residues 12 to 16 (GAGGG), 36 to 38 (VSK), 44 to 52 (THTVAAEGG), 156 to 158 (HFV), and D212 contribute to the FAD site. The residue at position 45 (H45) is a Tele-8alpha-FAD histidine. Catalysis depends on residues H233 and R249. Residues 357–358 (HY), E381, and 392–398 (RLGSNSL) each bind FAD.

It belongs to the FAD-dependent oxidoreductase 2 family. FRD/SDH subfamily. Part of an enzyme complex containing four subunits: a flavoprotein (FrdA), an iron-sulfur protein (FrdB), and two hydrophobic anchor proteins (FrdC and FrdD). FAD serves as cofactor.

It is found in the cell inner membrane. It carries out the reaction a quinone + succinate = fumarate + a quinol. It catalyses the reaction a menaquinone + succinate = a menaquinol + fumarate. The sequence is that of Fumarate reductase flavoprotein subunit (frdA) from Haemophilus influenzae (strain ATCC 51907 / DSM 11121 / KW20 / Rd).